We begin with the raw amino-acid sequence, 339 residues long: Biotin synthase (339 aa).

One can recognise a Radical SAM core domain in the interval 55–282 (NAVQLSTLLS…KAVVRLSAGR (228 aa)). Positions 70, 74, and 77 each coordinate [4Fe-4S] cluster. Positions 114, 145, 205, and 277 each coordinate [2Fe-2S] cluster.

It belongs to the radical SAM superfamily. Biotin synthase family. Homodimer. It depends on [4Fe-4S] cluster as a cofactor. Requires [2Fe-2S] cluster as cofactor.

The catalysed reaction is (4R,5S)-dethiobiotin + (sulfur carrier)-SH + 2 reduced [2Fe-2S]-[ferredoxin] + 2 S-adenosyl-L-methionine = (sulfur carrier)-H + biotin + 2 5'-deoxyadenosine + 2 L-methionine + 2 oxidized [2Fe-2S]-[ferredoxin]. Its pathway is cofactor biosynthesis; biotin biosynthesis; biotin from 7,8-diaminononanoate: step 2/2. In terms of biological role, catalyzes the conversion of dethiobiotin (DTB) to biotin by the insertion of a sulfur atom into dethiobiotin via a radical-based mechanism. This Burkholderia vietnamiensis (strain G4 / LMG 22486) (Burkholderia cepacia (strain R1808)) protein is Biotin synthase.